Here is a 64-residue protein sequence, read N- to C-terminus: U9-ctenitoxin-Pr1a (64 aa).

5 disulfide bridges follow: C3-C15, C9-C24, C14-C47, C34-C55, and C49-C61.

As to expression, expressed by the venom gland.

It localises to the secreted. In terms of biological role, non-toxic to mice and insects. This Phoneutria reidyi (Brazilian Amazonian armed spider) protein is U9-ctenitoxin-Pr1a.